The primary structure comprises 107 residues: Thiosulfate sulfurtransferase GlpE (107 aa).

The 85-residue stretch at 17 to 101 folds into the Rhodanese domain; the sequence is AAGAARLVDI…GFEAWRREFP (85 aa). Cys65 (cysteine persulfide intermediate) is an active-site residue.

This sequence belongs to the GlpE family.

Its subcellular location is the cytoplasm. It carries out the reaction thiosulfate + hydrogen cyanide = thiocyanate + sulfite + 2 H(+). The catalysed reaction is thiosulfate + [thioredoxin]-dithiol = [thioredoxin]-disulfide + hydrogen sulfide + sulfite + 2 H(+). In terms of biological role, transferase that catalyzes the transfer of sulfur from thiosulfate to thiophilic acceptors such as cyanide or dithiols. May function in a CysM-independent thiosulfate assimilation pathway by catalyzing the conversion of thiosulfate to sulfite, which can then be used for L-cysteine biosynthesis. This Aeromonas hydrophila subsp. hydrophila (strain ATCC 7966 / DSM 30187 / BCRC 13018 / CCUG 14551 / JCM 1027 / KCTC 2358 / NCIMB 9240 / NCTC 8049) protein is Thiosulfate sulfurtransferase GlpE.